The primary structure comprises 123 residues: Large ribosomal subunit protein uL14 (123 aa).

The protein belongs to the universal ribosomal protein uL14 family. In terms of assembly, part of the 50S ribosomal subunit. Forms a cluster with proteins L3 and L19. In the 70S ribosome, L14 and L19 interact and together make contacts with the 16S rRNA in bridges B5 and B8.

Binds to 23S rRNA. Forms part of two intersubunit bridges in the 70S ribosome. The chain is Large ribosomal subunit protein uL14 from Koribacter versatilis (strain Ellin345).